A 429-amino-acid chain; its full sequence is 4-hydroxybutyrate coenzyme A transferase (429 aa).

215–219 serves as a coordination point for CoA; sequence GIGAI. Glutamate 238 serves as the catalytic 5-glutamyl coenzyme A thioester intermediate. Position 336 (glycine 336) interacts with CoA.

It belongs to the acetyl-CoA hydrolase/transferase family.

This is 4-hydroxybutyrate coenzyme A transferase (cat2) from Clostridium kluyveri (strain ATCC 8527 / DSM 555 / NBRC 12016 / NCIMB 10680 / K1).